Consider the following 124-residue polypeptide: Small ribosomal subunit protein uS12 (124 aa).

Aspartate 89 carries the post-translational modification 3-methylthioaspartic acid.

Belongs to the universal ribosomal protein uS12 family. Part of the 30S ribosomal subunit. Contacts proteins S8 and S17. May interact with IF1 in the 30S initiation complex.

In terms of biological role, with S4 and S5 plays an important role in translational accuracy. Interacts with and stabilizes bases of the 16S rRNA that are involved in tRNA selection in the A site and with the mRNA backbone. Located at the interface of the 30S and 50S subunits, it traverses the body of the 30S subunit contacting proteins on the other side and probably holding the rRNA structure together. The combined cluster of proteins S8, S12 and S17 appears to hold together the shoulder and platform of the 30S subunit. The protein is Small ribosomal subunit protein uS12 of Acinetobacter baumannii (strain AB307-0294).